The primary structure comprises 630 residues: UvrABC system protein C (630 aa).

The GIY-YIG domain occupies 18 to 97; that stretch reads TQSGVYLMKN…IKKHRPKYNI (80 aa). One can recognise a UVR domain in the interval 207–242; that stretch reads KKVIKSMTEKMMGAADEEKFEVAARLRDSIEAIKAI.

This sequence belongs to the UvrC family. As to quaternary structure, interacts with UvrB in an incision complex.

It is found in the cytoplasm. Its function is as follows. The UvrABC repair system catalyzes the recognition and processing of DNA lesions. UvrC both incises the 5' and 3' sides of the lesion. The N-terminal half is responsible for the 3' incision and the C-terminal half is responsible for the 5' incision. This is UvrABC system protein C from Bdellovibrio bacteriovorus (strain ATCC 15356 / DSM 50701 / NCIMB 9529 / HD100).